The chain runs to 205 residues: Holliday junction branch migration complex subunit RuvA (205 aa).

Residues 1 to 65 (MIAKLKGILD…EDRIHLFGFL (65 aa)) are domain I. The domain II stretch occupies residues 66–144 (DNTEKVAFNM…NINTIANNTS (79 aa)). Positions 145–153 (LAILSTDSN) are flexible linker. Residues 154–205 (THDNILSDAITALIALGISRAEATQILSDIYALFPSISVNELVRTALQRRAK) form a domain III region.

It belongs to the RuvA family. In terms of assembly, homotetramer. Forms an RuvA(8)-RuvB(12)-Holliday junction (HJ) complex. HJ DNA is sandwiched between 2 RuvA tetramers; dsDNA enters through RuvA and exits via RuvB. An RuvB hexamer assembles on each DNA strand where it exits the tetramer. Each RuvB hexamer is contacted by two RuvA subunits (via domain III) on 2 adjacent RuvB subunits; this complex drives branch migration. In the full resolvosome a probable DNA-RuvA(4)-RuvB(12)-RuvC(2) complex forms which resolves the HJ.

It localises to the cytoplasm. In terms of biological role, the RuvA-RuvB-RuvC complex processes Holliday junction (HJ) DNA during genetic recombination and DNA repair, while the RuvA-RuvB complex plays an important role in the rescue of blocked DNA replication forks via replication fork reversal (RFR). RuvA specifically binds to HJ cruciform DNA, conferring on it an open structure. The RuvB hexamer acts as an ATP-dependent pump, pulling dsDNA into and through the RuvAB complex. HJ branch migration allows RuvC to scan DNA until it finds its consensus sequence, where it cleaves and resolves the cruciform DNA. The chain is Holliday junction branch migration complex subunit RuvA from Orientia tsutsugamushi (strain Boryong) (Rickettsia tsutsugamushi).